The sequence spans 149 residues: Calmodulin (149 aa).

Residue alanine 2 is modified to N-acetylalanine. EF-hand domains follow at residues 8-43, 44-79, 81-116, and 117-149; these read EQIS…LGQN, PTEA…KMRD, DSEE…LGEK, and LTDN…MLSK. Residues aspartate 21, aspartate 23, aspartate 25, threonine 27, glutamate 32, aspartate 57, aspartate 59, asparagine 61, threonine 63, glutamate 68, aspartate 94, aspartate 96, asparagine 98, tyrosine 100, glutamate 105, aspartate 130, aspartate 132, aspartate 134, glutamine 136, and glutamate 141 each contribute to the Ca(2+) site.

Belongs to the calmodulin family. Post-translationally, trimethylation of Lys-116 observed in other calmodulins is absent here.

In terms of biological role, calmodulin mediates the control of a large number of enzymes, ion channels and other proteins by Ca(2+). Among the enzymes to be stimulated by the calmodulin-Ca(2+) complex are a number of protein kinases and phosphatases. The chain is Calmodulin (CMD1) from Pleurotus cornucopiae (Cornucopia mushroom).